Reading from the N-terminus, the 275-residue chain is NAD kinase (275 aa).

Asp-66 acts as the Proton acceptor in catalysis. NAD(+) is bound by residues 66–67 (DG), 138–139 (NE), His-168, Asp-170, 181–186 (TAYNLS), and Val-205.

This sequence belongs to the NAD kinase family. The cofactor is a divalent metal cation.

Its subcellular location is the cytoplasm. The catalysed reaction is NAD(+) + ATP = ADP + NADP(+) + H(+). In terms of biological role, involved in the regulation of the intracellular balance of NAD and NADP, and is a key enzyme in the biosynthesis of NADP. Catalyzes specifically the phosphorylation on 2'-hydroxyl of the adenosine moiety of NAD to yield NADP. The polypeptide is NAD kinase (Halorubrum lacusprofundi (strain ATCC 49239 / DSM 5036 / JCM 8891 / ACAM 34)).